A 239-amino-acid chain; its full sequence is Small ribosomal subunit protein uS2 (239 aa).

The protein belongs to the universal ribosomal protein uS2 family.

This is Small ribosomal subunit protein uS2 from Synechococcus sp. (strain WH7803).